A 549-amino-acid chain; its full sequence is Cation/acetate symporter ActP (549 aa).

Over 1–32 (MKRVLTALAATLPFAANAADAISGAVERQPTN) the chain is Periplasmic. The chain crosses the membrane as a helical span at residues 33 to 55 (WQAIIMFLIFVVFTLGITYWASK). The Cytoplasmic portion of the chain corresponds to 56–75 (RVRSRNDYYTAGGNITGFQN). A helical membrane pass occupies residues 76-98 (GLAIAGDYMSAASFLGISALVFT). Residues 99–102 (SGYD) lie on the Periplasmic side of the membrane. The helical transmembrane segment at 103-125 (GLIYSLGFLVGWPIILFLIAERL) threads the bilayer. Residues 126–145 (RNLGRYTFADVASYRLKQGP) are Cytoplasmic-facing. Residues 146 to 168 (IRILSACGSLVVVALYLIAQMVG) form a helical membrane-spanning segment. The Periplasmic portion of the chain corresponds to 169-182 (AGKLIELLFGLNYH). The helical transmembrane segment at 183-205 (IAVVLVGVLMMMYVLFGGMLATT) threads the bilayer. Residues 206–211 (WVQIIK) are Cytoplasmic-facing. Residues 212 to 234 (AVLLLFGASFMAFMVMKHVGFSF) form a helical membrane-spanning segment. Over 235–263 (NNLFSEAMAVHPKGVDIMKPGGLVKDPIS) the chain is Periplasmic. The chain crosses the membrane as a helical span at residues 264–286 (ALSLGLGLMFGTAGLPHILMHFF). Topologically, residues 287–297 (TVSDAREARKS) are cytoplasmic. Residues 298 to 320 (VFYATGFMGYFYILTFIIGFGAI) form a helical membrane-spanning segment. Residues 321–358 (MLVGANPEYKDAAGHLIGGNNMAAVHLANAVGGNLFLG) are Periplasmic-facing. Residues 359 to 381 (FISAVAFATILAVVAGLTLAGAS) traverse the membrane as a helical segment. The Cytoplasmic portion of the chain corresponds to 382-401 (AVSHDLYANVFKKGATEREE). Residues 402-424 (LRVSKITVLILGVIAIILGVLFE) traverse the membrane as a helical segment. At 425–427 (NQN) the chain is on the periplasmic side. Residues 428-450 (IAFMVGLAFAIAASCNFPIILLS) form a helical membrane-spanning segment. At 451–461 (MYWSKLTTRGA) the chain is on the cytoplasmic side. The helical transmembrane segment at 462–484 (MLGGWLGLITAVVLMILGPTIWV) threads the bilayer. The Periplasmic portion of the chain corresponds to 485 to 493 (QILGHEKAI). A helical membrane pass occupies residues 494–516 (FPYEYPALFSISVAFLGIWLFSA). At 517–549 (TDNSAEGARERELFRAQFIRSQTGFGVEQGRAH) the chain is on the cytoplasmic side.

This sequence belongs to the sodium:solute symporter (SSF) (TC 2.A.21) family.

Its subcellular location is the cell inner membrane. Transports acetate. This chain is Cation/acetate symporter ActP (actP), found in Escherichia coli O6:H1 (strain CFT073 / ATCC 700928 / UPEC).